The sequence spans 150 residues: MIP18 family protein FAM96A (150 aa).

This sequence belongs to the MIP18 family.

Its function is as follows. May play a role in chromosome segregation through establishment of sister chromatid cohesion. This is MIP18 family protein FAM96A (fam96A) from Dictyostelium discoideum (Social amoeba).